The sequence spans 717 residues: Probable E3 ubiquitin-protein ligase WAVH2 (717 aa).

Polar residues-rich tracts occupy residues 13–28 and 85–94; these read VSSNQDKPQQHSSLHT and RTTSNATPRT. The segment at 13–120 is disordered; sequence VSSNQDKPQQ…SSSSSSSQGG (108 aa). Over residues 95–117 the composition is skewed to low complexity; that stretch reads SNSSSPKFFSNPSSPKSSSSSSS. Residues 140 to 184 form an RING-type; atypical zinc finger; it reads CAICLQRVNSNQSNSTAAIFTAECSHSFHLSCVNGLEDKRCPFCS. In terms of domain architecture, VWFA spans 326–456; the sequence is DLVTVLDLSN…LNATRIPFVV (131 aa).

Expressed in root tips, cotyledons, leaf primordia and hypocotyls.

It catalyses the reaction S-ubiquitinyl-[E2 ubiquitin-conjugating enzyme]-L-cysteine + [acceptor protein]-L-lysine = [E2 ubiquitin-conjugating enzyme]-L-cysteine + N(6)-ubiquitinyl-[acceptor protein]-L-lysine.. Functionally, probable E3 ubiquitin-protein ligase involved in the regulation of root growth. Acts as a positive regulator of root gravitropism. This Arabidopsis thaliana (Mouse-ear cress) protein is Probable E3 ubiquitin-protein ligase WAVH2.